Reading from the N-terminus, the 869-residue chain is Leucine--tRNA ligase (869 aa).

A 'HIGH' region motif is present at residues 51–61 (PYPSGRIHMGH). Residues 636–640 (KMSKS) carry the 'KMSKS' region motif. Position 639 (K639) interacts with ATP.

Belongs to the class-I aminoacyl-tRNA synthetase family.

The protein resides in the cytoplasm. It carries out the reaction tRNA(Leu) + L-leucine + ATP = L-leucyl-tRNA(Leu) + AMP + diphosphate. The polypeptide is Leucine--tRNA ligase (Dinoroseobacter shibae (strain DSM 16493 / NCIMB 14021 / DFL 12)).